A 433-amino-acid chain; its full sequence is 26S proteasome regulatory subunit 7 (433 aa).

Positions 1-22 (MPDYLGADQRKTKEDEKDDKPI) are disordered. Residues 8–22 (DQRKTKEDEKDDKPI) show a composition bias toward basic and acidic residues. At Lys-116 the chain carries N6-acetyllysine. An ATP-binding site is contributed by 216–223 (GPPGTGKT). Lys-422 is modified (N6-acetyllysine).

Belongs to the AAA ATPase family. In terms of assembly, component of the 19S proteasome regulatory particle complex. The 26S proteasome consists of a 20S core particle (CP) and two 19S regulatory subunits (RP). The regulatory particle is made of a lid composed of 9 subunits, a base containing 6 ATPases including PSMC2 and few additional components. Interacts with NDC80/HEC; this interaction is detected only during M phase. Interacts and SQSTM1. Interacts with PAAF1. Directly interacts with TRIM5. In terms of processing, monoubiquitinated by RNF181. Post-translationally, phosphorylated. Dephosphorylated by UBLCP1 which impairs PSMC2 ATPase activity and disrupts 26S proteasome assembly.

It localises to the cytoplasm. It is found in the nucleus. Functionally, component of the 26S proteasome, a multiprotein complex involved in the ATP-dependent degradation of ubiquitinated proteins. This complex plays a key role in the maintenance of protein homeostasis by removing misfolded or damaged proteins, which could impair cellular functions, and by removing proteins whose functions are no longer required. Therefore, the proteasome participates in numerous cellular processes, including cell cycle progression, apoptosis, or DNA damage repair. PSMC2 belongs to the heterohexameric ring of AAA (ATPases associated with diverse cellular activities) proteins that unfolds ubiquitinated target proteins that are concurrently translocated into a proteolytic chamber and degraded into peptides. This chain is 26S proteasome regulatory subunit 7 (PSMC2), found in Bos taurus (Bovine).